A 338-amino-acid polypeptide reads, in one-letter code: MSALTPASEVILRHREQFSSHHLLFAGDIQDTLATQIDAASVRVHTNQYHHWQSLIRTLGESAWFGLVAEKAFTQGCDTLIYYWPKSKQEARFQLRSLFSVLPKGINIFIVGENRSGVRSVDKLMDGMATFRKIDSARRCSLFYGQLEHEVQFEQDNWWNSYQVENVIVNTLPGVFSQDELDVGSRLLLSTFDKPLSGNLLDIACGAGVLAAVLGKKNPELALTLSDVNAAAIASSKATLKANKLEGHVVVSNVYSNIEDKFDWIISNPPFHEGLKTSLLATDDLIRQAPNHLKPGGKLRIVANAFLPYPDLLDKTFGTHEVIAQTGKFKVYQATKKF.

This sequence belongs to the methyltransferase superfamily. RsmC family. Monomer.

The protein localises to the cytoplasm. It carries out the reaction guanosine(1207) in 16S rRNA + S-adenosyl-L-methionine = N(2)-methylguanosine(1207) in 16S rRNA + S-adenosyl-L-homocysteine + H(+). In terms of biological role, specifically methylates the guanine in position 1207 of 16S rRNA in the 30S particle. The sequence is that of Ribosomal RNA small subunit methyltransferase C from Photorhabdus laumondii subsp. laumondii (strain DSM 15139 / CIP 105565 / TT01) (Photorhabdus luminescens subsp. laumondii).